A 697-amino-acid polypeptide reads, in one-letter code: DNA ligase (697 aa).

NAD(+) is bound by residues 36-40, 85-86, and E123; these read DAEYD and SL. Catalysis depends on K125, which acts as the N6-AMP-lysine intermediate. Positions 146, 182, 320, and 344 each coordinate NAD(+). Zn(2+)-binding residues include C438, C441, C456, and C462. A BRCT domain is found at 619 to 697; sequence PQGNTLAGKT…EDGLKALLGV (79 aa).

Belongs to the NAD-dependent DNA ligase family. LigA subfamily. Mg(2+) is required as a cofactor. Requires Mn(2+) as cofactor.

The enzyme catalyses NAD(+) + (deoxyribonucleotide)n-3'-hydroxyl + 5'-phospho-(deoxyribonucleotide)m = (deoxyribonucleotide)n+m + AMP + beta-nicotinamide D-nucleotide.. Functionally, DNA ligase that catalyzes the formation of phosphodiester linkages between 5'-phosphoryl and 3'-hydroxyl groups in double-stranded DNA using NAD as a coenzyme and as the energy source for the reaction. It is essential for DNA replication and repair of damaged DNA. This is DNA ligase from Bordetella petrii (strain ATCC BAA-461 / DSM 12804 / CCUG 43448).